The primary structure comprises 846 residues: Spindle pole body component SPC98 (846 aa).

A phosphoserine mark is found at serine 124 and serine 136.

This sequence belongs to the TUBGCP family. In terms of assembly, interacts with TUB4, SPC72 and SPC97.

It localises to the nucleus. Its subcellular location is the cytoplasm. It is found in the cytoskeleton. The protein resides in the microtubule organizing center. The protein localises to the spindle pole body. Involved in microtubule organization by the microtubule organizing center, the spindle pole body (SPB). Probably part of the microtubule attachment site at the SPB. This chain is Spindle pole body component SPC98 (SPC98), found in Saccharomyces cerevisiae (strain ATCC 204508 / S288c) (Baker's yeast).